The chain runs to 144 residues: Mercuric transport protein MerC (144 aa).

Over 1–21 (MSAITRIIDKIGIVGTIVGSF) the chain is Cytoplasmic. A helical membrane pass occupies residues 22–42 (SCAMCFPAAASLGAAIGLGFL). 2 residues coordinate Hg(2+): cysteine 23 and cysteine 26. Residues 43-46 (SQWE) are Periplasmic-facing. Residues 47-67 (GLFVQWLIPIFASVALLATLA) form a helical membrane-spanning segment. At 68–78 (GWFSHRQWQRT) the chain is on the cytoplasmic side. The chain crosses the membrane as a helical span at residues 79–99 (LLGSIGPVLALVGVFGLTHHF). Topologically, residues 100 to 103 (LDKD) are periplasmic. The helical transmembrane segment at 104–124 (LARVIFYTGLVVMFLVSIWDM) threads the bilayer. Residues 125 to 144 (VNPANRRCATDGCETPAPRS) lie on the Cytoplasmic side of the membrane.

As to quaternary structure, monomer.

The protein resides in the cell inner membrane. With respect to regulation, inhibited by the thiol-modifying reagent N-ethylmaleimide (NEM). In terms of biological role, involved in mercuric ion uptake. The polypeptide is Mercuric transport protein MerC (Acidithiobacillus ferrooxidans (Thiobacillus ferrooxidans)).